The primary structure comprises 85 residues: Beta-insect depressant toxin BmKITa (85 aa).

The N-terminal stretch at 1–21 is a signal peptide; that stretch reads MKLFLLLLISASMLIDGLVNA. The LCN-type CS-alpha/beta domain maps to 22-82; it reads DGYIRGSNGC…TWKSESNTCG (61 aa). 4 disulfide bridges follow: Cys31–Cys81, Cys35–Cys56, Cys42–Cys63, and Cys46–Cys65. Residue Gly82 is modified to Glycine amide.

As to expression, expressed by the venom gland.

Its subcellular location is the secreted. Its function is as follows. Depressant insect beta-toxins cause a transient contraction paralysis followed by a slow flaccid paralysis. They bind voltage-independently at site-4 of sodium channels (Nav) and shift the voltage of activation toward more negative potentials thereby affecting sodium channel activation and promoting spontaneous and repetitive firing. This toxin also displays an evident analgesic effect but is devoid of any toxicity on mice. The protein is Beta-insect depressant toxin BmKITa of Olivierus martensii (Manchurian scorpion).